The following is a 610-amino-acid chain: Ubiquilin-like protein (610 aa).

One can recognise a Ubiquitin-like domain in the interval isoleucine 31–glycine 105. Residues glutamine 562–serine 607 enclose the UBA domain.

The sequence is that of Ubiquilin-like protein (Ubqlnl) from Mus musculus (Mouse).